The primary structure comprises 289 residues: Transcriptional regulator Rob (289 aa).

The HTH araC/xylS-type domain occupies Arg-8 to Ser-106. 2 DNA-binding regions (H-T-H motif) span residues Asp-25 to Thr-46 and Ile-73 to Phe-96.

Transcriptional regulator. Represses transcription of genes belonging to the flagellar regulon, including flhD, flhB and fliC; probably thereby leading to repression of motility. Binds to regulatory regions of target genes, including the promoters of the flhDC operon and of P-type ATPase mgtA. Involved in post-transcriptional regulation of expression. Represses expression of the flhDC operon in a post-transcriptional manner. Binds to the right arm of the replication origin oriC of the chromosome. Rob binding may influence the formation of the nucleoprotein structure, required for oriC function in the initiation of replication. This is Transcriptional regulator Rob from Salmonella typhimurium (strain LT2 / SGSC1412 / ATCC 700720).